Consider the following 243-residue polypeptide: LexA repressor 2 (243 aa).

Positions 48-68 form a DNA-binding region, H-T-H motif; sequence IREIGDAVGLTSTSSVAHQLR. Residues Ser167 and Lys204 each act as for autocatalytic cleavage activity in the active site.

Belongs to the peptidase S24 family. In terms of assembly, homodimer.

It carries out the reaction Hydrolysis of Ala-|-Gly bond in repressor LexA.. Functionally, represses a number of genes involved in the response to DNA damage (SOS response), including recA and lexA. In the presence of single-stranded DNA, RecA interacts with LexA causing an autocatalytic cleavage which disrupts the DNA-binding part of LexA, leading to derepression of the SOS regulon and eventually DNA repair. This chain is LexA repressor 2, found in Nocardia farcinica (strain IFM 10152).